The primary structure comprises 510 residues: ATP synthase subunit alpha (510 aa).

Residue 169–176 (GDRQTGKT) participates in ATP binding.

This sequence belongs to the ATPase alpha/beta chains family. As to quaternary structure, F-type ATPases have 2 components, CF(1) - the catalytic core - and CF(0) - the membrane proton channel. CF(1) has five subunits: alpha(3), beta(3), gamma(1), delta(1), epsilon(1). CF(0) has three main subunits: a(1), b(2) and c(9-12). The alpha and beta chains form an alternating ring which encloses part of the gamma chain. CF(1) is attached to CF(0) by a central stalk formed by the gamma and epsilon chains, while a peripheral stalk is formed by the delta and b chains.

It localises to the cell membrane. The catalysed reaction is ATP + H2O + 4 H(+)(in) = ADP + phosphate + 5 H(+)(out). Functionally, produces ATP from ADP in the presence of a proton gradient across the membrane. The alpha chain is a regulatory subunit. The sequence is that of ATP synthase subunit alpha from Thermomicrobium roseum (strain ATCC 27502 / DSM 5159 / P-2).